Here is a 522-residue protein sequence, read N- to C-terminus: Cytochrome b mRNA maturase bI3 (522 aa).

The Mitochondrial matrix portion of the chain corresponds to 1 to 31 (MTIRKSNPYLSLVNSYLMDSPQPSSMNYWWN). Positions 1–163 (MTIRKSNPYL…MPFMGGDLVP (163 aa)) are cytochrome b. The helical transmembrane segment at 32-52 (VGSLLGLCLVMQMASGMFLAM) threads the bilayer. At 53–84 (HYSSSMELAFNSVEHMMRDVNAGWLMRYIHAN) the chain is on the mitochondrial intermembrane side. Residues 85-105 (GASFFFMCLYLHMGKALYYGS) traverse the membrane as a helical segment. Over 106 to 110 (YKSPR) the chain is Mitochondrial matrix. Residues 111–131 (VLVWSMGVMMFMLTMATAFMG) form a helical membrane-spanning segment. Over 132–154 (YCLVYGQMSHWGATVITNLLSAM) the chain is Mitochondrial intermembrane. Residues 155 to 175 (PFMGGDLVPLSIILSLYLLYI) traverse the membrane as a helical segment. The tract at residues 164–522 (LSIILSLYLL…PYMSWHQKEQ (359 aa)) is maturase. Residues 176 to 522 (SLKTFMKMIF…PYMSWHQKEQ (347 aa)) lie on the Mitochondrial matrix side of the membrane.

It in the N-terminal section; belongs to the cytochrome b family. The protein in the C-terminal section; belongs to the LAGLIDADG endonuclease family.

It is found in the mitochondrion inner membrane. Mitochondrial mRNA maturase required for splicing of intron 3 of the cytochrome b (COB) gene, containing its own coding sequence. The chain is Cytochrome b mRNA maturase bI3 (bI3) from Debaryomyces hansenii (strain ATCC 36239 / CBS 767 / BCRC 21394 / JCM 1990 / NBRC 0083 / IGC 2968) (Yeast).